Reading from the N-terminus, the 254-residue chain is Diphthine synthase (254 aa).

S-adenosyl-L-methionine contacts are provided by residues Asp83, Leu86, 111–112 (SI), Leu163, and Val205.

The protein belongs to the diphthine synthase family. As to quaternary structure, homodimer.

The enzyme catalyses 2-[(3S)-amino-3-carboxypropyl]-L-histidyl-[translation elongation factor 2] + 3 S-adenosyl-L-methionine = diphthine-[translation elongation factor 2] + 3 S-adenosyl-L-homocysteine + 3 H(+). It participates in protein modification; peptidyl-diphthamide biosynthesis. S-adenosyl-L-methionine-dependent methyltransferase that catalyzes the trimethylation of the amino group of the modified target histidine residue in translation elongation factor 2 (EF-2), to form an intermediate called diphthine. The three successive methylation reactions represent the second step of diphthamide biosynthesis. This is Diphthine synthase from Pyrobaculum aerophilum (strain ATCC 51768 / DSM 7523 / JCM 9630 / CIP 104966 / NBRC 100827 / IM2).